Reading from the N-terminus, the 445-residue chain is Proline--tRNA ligase (445 aa).

This sequence belongs to the class-II aminoacyl-tRNA synthetase family. ProS type 2 subfamily. Homodimer.

It localises to the cytoplasm. It carries out the reaction tRNA(Pro) + L-proline + ATP = L-prolyl-tRNA(Pro) + AMP + diphosphate. Its function is as follows. Catalyzes the attachment of proline to tRNA(Pro) in a two-step reaction: proline is first activated by ATP to form Pro-AMP and then transferred to the acceptor end of tRNA(Pro). The polypeptide is Proline--tRNA ligase (Cereibacter sphaeroides (strain ATCC 17023 / DSM 158 / JCM 6121 / CCUG 31486 / LMG 2827 / NBRC 12203 / NCIMB 8253 / ATH 2.4.1.) (Rhodobacter sphaeroides)).